We begin with the raw amino-acid sequence, 1758 residues long: Y' element ATP-dependent helicase YJL225C (1758 aa).

Positions 668–845 (EIYMADTPSV…LQRIGLTGLA (178 aa)) constitute a Helicase ATP-binding domain. 681-688 (APPGYGKT) serves as a coordination point for ATP. Residues 900–1051 (ALKLLLALFE…EFYGLESKKG (152 aa)) enclose the Helicase C-terminal domain. Residues 1142 to 1360 (NVRTNATTNA…ATTTESTNAS (219 aa)) are compositionally biased toward low complexity. Residues 1142 to 1384 (NVRTNATTNA…RFHPVTDINK (243 aa)) are disordered. The span at 1361–1384 (AKEDANKDGNAEDNRFHPVTDINK) shows a compositional bias: basic and acidic residues.

It belongs to the helicase family. Yeast subtelomeric Y' repeat subfamily.

In terms of biological role, catalyzes DNA unwinding and is involved in telomerase-independent telomere maintenance. In Saccharomyces cerevisiae (strain ATCC 204508 / S288c) (Baker's yeast), this protein is Y' element ATP-dependent helicase YJL225C.